We begin with the raw amino-acid sequence, 127 residues long: Large ribosomal subunit protein bL19 (127 aa).

Belongs to the bacterial ribosomal protein bL19 family.

In terms of biological role, this protein is located at the 30S-50S ribosomal subunit interface and may play a role in the structure and function of the aminoacyl-tRNA binding site. The polypeptide is Large ribosomal subunit protein bL19 (Paraburkholderia phymatum (strain DSM 17167 / CIP 108236 / LMG 21445 / STM815) (Burkholderia phymatum)).